The chain runs to 263 residues: Proteasome subunit alpha (263 aa).

Residues 229–263 (AALLQDTPPDDADADADAGKKPANDGNLPPNDDKS) form a disordered region.

The protein belongs to the peptidase T1A family. In terms of assembly, the 20S proteasome core is composed of 14 alpha and 14 beta subunits that assemble into four stacked heptameric rings, resulting in a barrel-shaped structure. The two inner rings, each composed of seven catalytic beta subunits, are sandwiched by two outer rings, each composed of seven alpha subunits. The catalytic chamber with the active sites is on the inside of the barrel. Has a gated structure, the ends of the cylinder being occluded by the N-termini of the alpha-subunits. Is capped by the proteasome-associated ATPase, ARC.

The protein resides in the cytoplasm. The protein operates within protein degradation; proteasomal Pup-dependent pathway. Its activity is regulated as follows. The formation of the proteasomal ATPase ARC-20S proteasome complex, likely via the docking of the C-termini of ARC into the intersubunit pockets in the alpha-rings, may trigger opening of the gate for substrate entry. Interconversion between the open-gate and close-gate conformations leads to a dynamic regulation of the 20S proteasome proteolysis activity. Its function is as follows. Component of the proteasome core, a large protease complex with broad specificity involved in protein degradation. The polypeptide is Proteasome subunit alpha (Actinosynnema mirum (strain ATCC 29888 / DSM 43827 / JCM 3225 / NBRC 14064 / NCIMB 13271 / NRRL B-12336 / IMRU 3971 / 101)).